We begin with the raw amino-acid sequence, 4146 residues long: DNA-dependent protein kinase catalytic subunit (4146 aa).

HEAT repeat units follow at residues 308–343 (DDYQ…LKQI), 925–962 (VIYL…VAFM), 1026–1062 (QDTV…LRWS), and 1075–1111 (PVNT…YRDF). TPR repeat units lie at residues 1745–1778 (PMKS…SQSP) and 1974–2007 (VFSE…QRNY). S2075 is modified (phosphoserine; by autocatalysis). The residue at position 2631 (T2631) is a Phosphothreonine; by autocatalysis. S2634 bears the Phosphoserine; by autocatalysis mark. Phosphothreonine; by autocatalysis is present on residues T2659 and T2668. The FAT domain maps to 2873-3556 (FIACVQDMCY…VYPFMVSGES (684 aa)). In terms of domain architecture, PI3K/PI4K catalytic spans 3739-4071 (FDERVSVMAS…IHCAKRKLDG (333 aa)). The G-loop stretch occupies residues 3745-3751 (VMASIRK). Residues 3937 to 3945 (GIGDRHLSN) form a catalytic loop region. Residues 3957–3982 (GIDFGHAFGTATQFLPVPELMPFRLT) form an activation loop region. The region spanning 4114–4146 (DGLTEETQVQCLIDQATDPNILGRVWKGWEPWI) is the FATC domain.

This sequence belongs to the PI3/PI4-kinase family. DNA-PK is a heterotrimer of prkdc and the Ku dimer (composed of xrcc6/Ku70 and xrcc5/Ku86). Component of the core long-range non-homologous end joining (NHEJ) complex (also named DNA-PK complex) composed of prkdc, lig4, xrcc4, xrcc6/ku70, xrcc5/ku86 and nhej1/xlf. Additional component of the NHEJ complex includes paxx. Following autophosphorylation, prkdc dissociates from DNA. Autophosphorylated at two clusters, the T2609 cluster and the S2056 cluster. Autophosphorylated on Ser-2075, Thr-2631, Thr-2659 and Thr-2668. Ser-2075 and Thr-2668 are DNA damage-inducible phosphorylation sites (inducible with ionizing radiation, IR) dephosphorylated by PPP5C. Autophosphorylation induces a conformational change that leads to remodeling of the DNA-PK complex, requisite for efficient end processing and DNA repair. Autophosphorylation in trans within DNA-PK complexes loaded on DNA ends leads to the dissociation of PRKDC from DNA and the transition into the short-range NHEJ complex. Autophosphorylation of the T2609 cluster is required for hematopoietic development and protein synthesis in erythrocytes precursors.

Its subcellular location is the nucleus. It is found in the nucleolus. The enzyme catalyses L-seryl-[protein] + ATP = O-phospho-L-seryl-[protein] + ADP + H(+). It carries out the reaction L-threonyl-[protein] + ATP = O-phospho-L-threonyl-[protein] + ADP + H(+). Functionally, serine/threonine-protein kinase that acts as a molecular sensor for DNA damage. Involved in DNA nonhomologous end joining (NHEJ) required for double-strand break (DSB) repair and V(D)J recombination. Must be bound to DNA to express its catalytic properties. Promotes processing of hairpin DNA structures in V(D)J recombination by activation of the hairpin endonuclease artemis (DCLRE1C). Recruited by XRCC5 and XRCC6 to DNA ends and is required to (1) protect and align broken ends of DNA, thereby preventing their degradation, (2) and sequester the DSB for repair by NHEJ. Acts as a scaffold protein to aid the localization of DNA repair proteins to the site of damage. The assembly of the DNA-PK complex at DNA ends is also required for the NHEJ ligation step. Found at the ends of chromosomes, suggesting a further role in the maintenance of telomeric stability and the prevention of chromosomal end fusion. As part of the DNA-PK complex, involved in the early steps of ribosome assembly by promoting the processing of precursor rRNA into mature 18S rRNA in the small-subunit processome. Recognizes the substrate consensus sequence [ST]-Q. Phosphorylates 'Ser-139' of histone variant H2AX, thereby regulating DNA damage response mechanism. The chain is DNA-dependent protein kinase catalytic subunit (prkdc) from Xenopus laevis (African clawed frog).